A 640-amino-acid chain; its full sequence is Protein UL35 (640 aa).

Disordered stretches follow at residues 353 to 373 (ERGE…PREA), 500 to 571 (ASSS…PRQR), and 586 to 640 (AYSH…LRHL). Over residues 358–367 (GDEDEEQEND) the composition is skewed to acidic residues. Residues 500–562 (ASSSSASSSS…LSGSHGISSA (63 aa)) are compositionally biased toward low complexity. Residues 588 to 598 (SHHRRHRRRRS) are compositionally biased toward basic residues. Residues 631 to 640 (DDLAENLRHL) show a composition bias toward basic and acidic residues.

Belongs to the herpesviridae pp85 family. Interacts with UL82. Interacts with isoform UL35A. Interacts with host UBP7; this interaction significantly inhibits the ability of USP7 to form nuclear bodies. Interacts with host DCAF1 (via C-terminus). Interacts with host SNX5; this interaction allows proper gB localization during viral assembly. Interacts with host TBK1; this interaction prevents type I interferon production. As to quaternary structure, interacts with UL82. Interacts with isoform UL35. Interacts with host UBP7; this interaction significantly inhibits the ability of USP7 to form nuclear bodies. Interacts with host SNX5; this interaction allows proper gB localization during viral assembly.

It localises to the virion tegument. The protein resides in the host nucleus. Its subcellular location is the host cytoplasm. Its function is as follows. Plays important role in immediate-early gene expression through interaction with UL82. Forms nuclear bodies in host nucleus, independently of PML. In turn, UL35 nuclear bodies associate with and remodel PML bodies. Through interaction with host DCAF1, causes cells to accumulate in the G2 phase of the cell cycle by inducing a DNA damage response. Regulates viral assembly by controlling the localization of the essential gB through regulation of a retrograde transport pathway. This modulation occurs via binding and inhibition of host sorting nexin 5/SNX5. Also plays a role in the inhibition of pattern recognition receptor-mediated type I interferon signaling at the level of TBK1. In terms of biological role, promotes cytoplasmic UL82 accumulation and inhibits UL35-containing nuclear bodies formation. Regulates viral assembly by controlling the localization of the essential gB through regulation of a retrograde transport pathway. This modulation occurs via binding and inhibition of host sorting nexin 5/SNX5. In Homo sapiens (Human), this protein is Protein UL35 (UL35).